Reading from the N-terminus, the 91-residue chain is MPRSLKKGPFIDLHLLKKVEAAVEKNDRRPIKTWSRRSTIFPDFVGLTIAVHNGRQHVPVLVTEDMVGHKLGEFAPTRTYRGHAADKKAKR.

The protein belongs to the universal ribosomal protein uS19 family.

In terms of biological role, protein S19 forms a complex with S13 that binds strongly to the 16S ribosomal RNA. In Marinomonas sp. (strain MWYL1), this protein is Small ribosomal subunit protein uS19.